A 518-amino-acid chain; its full sequence is Sensor protein kinase HptS (518 aa).

2 helical membrane-spanning segments follow: residues 20–40 (IFPV…IYIW) and 222–242 (GITL…FGFI). The Histidine kinase domain occupies 297 to 513 (EQLIHSIEHT…LICYKIPLSR (217 aa)). H325 carries the post-translational modification Phosphohistidine; by autocatalysis.

Post-translationally, autophosphorylated.

The protein localises to the cell membrane. It catalyses the reaction ATP + protein L-histidine = ADP + protein N-phospho-L-histidine.. In terms of biological role, member of the two-component regulatory system HptS/HptR that regulates genes involved in hexose phosphate transport system in response to changes in extracellular phosphate sources. May act as a sensor protein kinase which is autophosphorylated at a histidine residue and transfers its phosphate group to the conserved aspartic acid residue in the regulatory domain of HptS. In turn, HptS antagonizes CcpA-dependent transcription of a subset of CcpA-regulated genes involved in antibiotic susceptibility. In Staphylococcus aureus (strain MSSA476), this protein is Sensor protein kinase HptS (hptS).